A 139-amino-acid polypeptide reads, in one-letter code: Large ribosomal subunit protein eL32 (139 aa).

Belongs to the eukaryotic ribosomal protein eL32 family.

The sequence is that of Large ribosomal subunit protein eL32 (RPL32) from Encephalitozoon cuniculi (strain GB-M1) (Microsporidian parasite).